The following is a 227-amino-acid chain: MKATYHGHSVVHIETNGYHIWIDPFLNGNKHTDIKPQDVKADVILLTHGHGDHIGDTIEIAKNNDALVIAPFELATYLGWQGVKTHPLSIGGGREFEFGKVKLTQAFHGSAIIDEDAKTITYTGMPSGILFTAEGKTIYHAGDTALFSDMKLIGELNHIELAFLPIGDNFTMGPDDARIAAEWLRAKQVVPVHYSTFPPIEQDPHAFADSLHGGVGHVLNSGQSIEI.

This sequence belongs to the UPF0173 family.

The protein is UPF0173 metal-dependent hydrolase BPUM_2573 of Bacillus pumilus (strain SAFR-032).